A 359-amino-acid polypeptide reads, in one-letter code: DNA replication and repair protein RecF (359 aa).

Position 30–37 (30–37 (GQNAQGKT)) interacts with ATP.

Belongs to the RecF family.

It localises to the cytoplasm. In terms of biological role, the RecF protein is involved in DNA metabolism; it is required for DNA replication and normal SOS inducibility. RecF binds preferentially to single-stranded, linear DNA. It also seems to bind ATP. The polypeptide is DNA replication and repair protein RecF (Lactococcus lactis subsp. cremoris (strain MG1363)).